The sequence spans 135 residues: Histone H2A.4 (135 aa).

It belongs to the histone H2A family. As to quaternary structure, the nucleosome is a histone octamer containing two molecules each of H2A, H2B, H3 and H4 assembled in one H3-H4 heterotetramer and two H2A-H2B heterodimers. The octamer wraps approximately 147 bp of DNA. As to expression, expressed preferentially in meristematic tissues of young seedlings, in stigma and ovary but not in pollen.

The protein localises to the nucleus. The protein resides in the chromosome. In terms of biological role, core component of nucleosome. Nucleosomes wrap and compact DNA into chromatin, limiting DNA accessibility to the cellular machineries which require DNA as a template. Histones thereby play a central role in transcription regulation, DNA repair, DNA replication and chromosomal stability. DNA accessibility is regulated via a complex set of post-translational modifications of histones, also called histone code, and nucleosome remodeling. The protein is Histone H2A.4 (TH254) of Triticum aestivum (Wheat).